We begin with the raw amino-acid sequence, 440 residues long: tRNA(Ile)-lysidine synthase (440 aa).

25-30 contacts ATP; that stretch reads SGGVDS.

Belongs to the tRNA(Ile)-lysidine synthase family.

The protein localises to the cytoplasm. The catalysed reaction is cytidine(34) in tRNA(Ile2) + L-lysine + ATP = lysidine(34) in tRNA(Ile2) + AMP + diphosphate + H(+). Ligates lysine onto the cytidine present at position 34 of the AUA codon-specific tRNA(Ile) that contains the anticodon CAU, in an ATP-dependent manner. Cytidine is converted to lysidine, thus changing the amino acid specificity of the tRNA from methionine to isoleucine. This is tRNA(Ile)-lysidine synthase from Vibrio cholerae serotype O1 (strain ATCC 39315 / El Tor Inaba N16961).